Consider the following 370-residue polypeptide: Glutamate 5-kinase (370 aa).

Position 17 (Lys-17) interacts with ATP. Substrate is bound by residues Ser-56, Asp-143, and Asn-155. Residue 175–176 (SD) coordinates ATP. The 78-residue stretch at 280-357 (KGEITVDAGA…DEIEGILGYP (78 aa)) folds into the PUA domain.

Belongs to the glutamate 5-kinase family.

Its subcellular location is the cytoplasm. The catalysed reaction is L-glutamate + ATP = L-glutamyl 5-phosphate + ADP. It participates in amino-acid biosynthesis; L-proline biosynthesis; L-glutamate 5-semialdehyde from L-glutamate: step 1/2. Functionally, catalyzes the transfer of a phosphate group to glutamate to form L-glutamate 5-phosphate. This Paracoccus denitrificans (strain Pd 1222) protein is Glutamate 5-kinase.